The sequence spans 499 residues: Gamma-aminobutyric acid receptor subunit beta (499 aa).

An N-terminal signal peptide occupies residues 1-23 (MWGIIVPFFSASLMCSLVAVVRC). Over 24–251 (QQDTDHFANV…IFQLQRNIGY (228 aa)) the chain is Extracellular. 4 N-linked (GlcNAc...) asparagine glycosylation sites follow: asparagine 32, asparagine 98, asparagine 106, and asparagine 152. Residues cysteine 167 and cysteine 181 are joined by a disulfide bond. A run of 3 helical transmembrane segments spans residues 252 to 273 (FIFQ…SFWI), 278 to 299 (TSAR…SNGV), and 311 to 333 (AIDI…YAAV). Residues 334–475 (NYTYWGARAK…RVQDVNTIDK (142 aa)) lie on the Cytoplasmic side of the membrane. A helical membrane pass occupies residues 476 to 499 (YARLMFPLLFIIFNTSYWSVYLLT).

It belongs to the ligand-gated ion channel (TC 1.A.9) family. Gamma-aminobutyric acid receptor (TC 1.A.9.5) subfamily. As to quaternary structure, generally pentameric. There are five types of GABA(A) receptor chains: alpha, beta, gamma, delta, and rho.

The protein resides in the postsynaptic cell membrane. Its subcellular location is the cell membrane. GABA, an inhibitory neurotransmitter, mediates neuronal inhibition by binding to the GABA/benzodiazepine receptor and opening an integral chloride channel. This chain is Gamma-aminobutyric acid receptor subunit beta, found in Lymnaea stagnalis (Great pond snail).